Here is a 1494-residue protein sequence, read N- to C-terminus: Neuropathy target esterase sws (1494 aa).

At 1-35 (MDVLELLRVSGSNMYYSTFLADAWCYYISNQITMT) the chain is on the lumenal side. The helical transmembrane segment at 36–56 (MYLYCALGVLSMLFIGWFVYF) threads the bilayer. The Cytoplasmic portion of the chain corresponds to 57-1494 (KRLARLRLRH…NTNNETKNYL (1438 aa)). 176-303 (IFGHFEKPIF…IRVIQVIMIR (128 aa)) is an a nucleoside 3',5'-cyclic phosphate binding site. Residues 362–372 (ASGTAGSTHTA) show a composition bias toward low complexity. 2 disordered regions span residues 362–405 (ASGT…ELSG) and 422–452 (NSYPPLYHQRESDGNLSTRRGSITQQEQPEV). The segment covering 435 to 449 (GNLSTRRGSITQQEQ) has biased composition (polar residues). Position 443 is a phosphoserine (serine 443). Residues 474-601 (ELGL…VVRR) and 590-717 (IVLD…LSHR) contribute to the a nucleoside 3',5'-cyclic phosphate site. One can recognise a PNPLA domain in the interval 944–1110 (LVLGGGGARG…VNNLPGHLWR (167 aa)). Residues 948–953 (GGGARG) carry the GXGXXG motif. Residues 975–979 (GVSIG) carry the GXSXG motif. Serine 977 functions as the Nucleophile in the catalytic mechanism. The active-site Proton acceptor is aspartate 1097. Positions 1097–1099 (DGG) match the DGA/G motif. The disordered stretch occupies residues 1367–1494 (MDKATQSTPP…NTNNETKNYL (128 aa)). A compositionally biased stretch (polar residues) spans 1370-1381 (ATQSTPPLQSKA). 2 stretches are compositionally biased toward basic and acidic residues: residues 1389-1420 (SKEEARHEWEIKREQKQELAREQELERERELS) and 1452-1483 (MDKKKTKDNDRDEVRGSAEDKGKEKEEDKENR). Residues 1484–1494 (SNTNNETKNYL) are compositionally biased toward polar residues.

The protein belongs to the NTE family. Interacts with Pka-C3; interaction inhibits the catalytic function of Pka-C3 and the esterase activity of sws.

The protein resides in the endoplasmic reticulum membrane. It carries out the reaction a 1-acyl-sn-glycero-3-phosphocholine + H2O = sn-glycerol 3-phosphocholine + a fatty acid + H(+). Its function is as follows. Phospholipase B that deacylates intracellular phosphatidylcholine (PtdCho), generating glycerophosphocholine (GroPtdCho). This deacylation occurs at both sn-2 and sn-1 positions of PtdCho. Its specific chemical modification by certain organophosphorus (OP) compounds leads to distal axonopathy. Plays a role in the signaling mechanism between neurons and glia that regulates glia wrapping during development of the adult brain. Essential for membrane lipid homeostasis and cell survival in both neurons and glia of the adult brain. This Drosophila pseudoobscura pseudoobscura (Fruit fly) protein is Neuropathy target esterase sws.